The sequence spans 354 residues: Eukaryotic translation initiation factor 3 subunit H (354 aa).

The segment at 1–28 (MATRQPYQKKFQSRDQREQTSSQQAPNS) is disordered. Residues 19 to 28 (QTSSQQAPNS) are compositionally biased toward polar residues. The MPN domain maps to 33 to 174 (VTVDALVVMK…LSAFRLSNKA (142 aa)).

It belongs to the eIF-3 subunit H family. In terms of assembly, component of the eukaryotic translation initiation factor 3 (eIF-3) complex.

The protein localises to the cytoplasm. Its function is as follows. Component of the eukaryotic translation initiation factor 3 (eIF-3) complex, which is involved in protein synthesis of a specialized repertoire of mRNAs and, together with other initiation factors, stimulates binding of mRNA and methionyl-tRNAi to the 40S ribosome. The eIF-3 complex specifically targets and initiates translation of a subset of mRNAs involved in cell proliferation. The protein is Eukaryotic translation initiation factor 3 subunit H of Monosiga brevicollis (Choanoflagellate).